An 894-amino-acid polypeptide reads, in one-letter code: Glutamate receptor 3 (894 aa).

A signal peptide spans 1-28; that stretch reads MARQKKMGQSVLRAVFFLVLGLLGHSHG. At 29–552 the chain is on the extracellular side; the sequence is GFPNTISIGG…GVFSFLDPLA (524 aa). N-linked (GlcNAc...) asparagine glycans are attached at residues Asn-63, Asn-266, Asn-380, Asn-415, and Asn-422. Cys-91 and Cys-340 are disulfide-bonded. Positions 508, 510, and 515 each coordinate L-glutamate. The chain crosses the membrane as a helical span at residues 553–573; the sequence is YEIWMCIVFAYIGVSVVLFLV. Residues 574–602 lie on the Cytoplasmic side of the membrane; that stretch reads SRFSPYEWHLEDNNEEPRDPQSPPDPPNE. The segment at residues 603–618 is an intramembrane region (helical; Pore-forming); that stretch reads FGIFNSLWFSLGAFMQ. The stretch at 619-621 is an intramembrane region; sequence QGC. The S-palmitoyl cysteine moiety is linked to residue Cys-621. The Cytoplasmic segment spans residues 622-627; it reads DISPRS. Residues 628–648 traverse the membrane as a helical segment; it reads LSGRIVGGVWWFFTLIIISSY. At 649–823 the chain is on the extracellular side; that stretch reads TANLAAFLTV…DKTSALSLSN (175 aa). 3 residues coordinate L-glutamate: Ser-686, Thr-687, and Glu-737. A disulfide bond links Cys-750 and Cys-805. Residues 824–844 traverse the membrane as a helical segment; sequence VAGVFYILVGGLGLAMMVALI. Residues 845-894 are Cytoplasmic-facing; the sequence is EFCYKSRAESKRMKLTKNTQNFKPAPATNTQNYATYREGYNVYGTESVKI. Residue Cys-847 is the site of S-palmitoyl cysteine attachment. Tyr-877 and Tyr-887 each carry phosphotyrosine.

It belongs to the glutamate-gated ion channel (TC 1.A.10.1) family. GRIA3 subfamily. In terms of assembly, homotetramer or heterotetramer of pore-forming glutamate receptor subunits. Tetramers may be formed by the dimerization of dimers. Interacts with PICK1, GRIP1 and GRIP2. Found in a complex with GRIA1, GRIA2, GRIA4, CNIH2, CNIH3, CACNG2, CACNG3, CACNG4, CACNG5, CACNG7 and CACNG8. Interacts with CACNG5. Found in a complex with GRIA1, GRIA2, GRIA4, DLG4, CACNG8 and CNIH2.

Its subcellular location is the cell membrane. It localises to the postsynaptic cell membrane. The protein localises to the postsynaptic density membrane. The catalysed reaction is Ca(2+)(in) = Ca(2+)(out). Its function is as follows. Ionotropic glutamate receptor that functions as a ligand-gated cation channel, gated by L-glutamate and glutamatergic agonists such as alpha-amino-3-hydroxy-5-methyl-4-isoxazolepropionic acid (AMPA), quisqualic acid, and kainic acid. L-glutamate acts as an excitatory neurotransmitter at many synapses in the central nervous system and plays an important role in fast excitatory synaptic transmission by inducing long-term potentiation. Binding of the excitatory neurotransmitter L-glutamate induces a conformation change, leading to the opening of the cation channel, and thereby converts the chemical signal to an electrical impulse upon entry of calcium. The receptor then desensitizes rapidly and enters a transient inactive state, characterized by the presence of bound agonist. In the presence of CACNG8, shows resensitization which is characterized by a delayed accumulation of current flux upon continued application of glutamate. In Homo sapiens (Human), this protein is Glutamate receptor 3.